Here is a 187-residue protein sequence, read N- to C-terminus: Small ribosomal subunit protein uS7 (187 aa).

The protein belongs to the universal ribosomal protein uS7 family. In terms of assembly, part of the 30S ribosomal subunit.

Its function is as follows. One of the primary rRNA binding proteins, it binds directly to 16S rRNA where it nucleates assembly of the head domain of the 30S subunit. Is located at the subunit interface close to the decoding center. The sequence is that of Small ribosomal subunit protein uS7 from Picrophilus torridus (strain ATCC 700027 / DSM 9790 / JCM 10055 / NBRC 100828 / KAW 2/3).